A 372-amino-acid polypeptide reads, in one-letter code: tRNA-specific 2-thiouridylase MnmA (372 aa).

ATP contacts are provided by residues Gly17–Ser24 and Met43. The segment at Asn103–Asp105 is interaction with target base in tRNA. Cys108 serves as the catalytic Nucleophile. The cysteines at positions 108 and 205 are disulfide-linked. Gly133 contributes to the ATP binding site. Positions Lys155–Gln157 are interaction with tRNA. Cys205 serves as the catalytic Cysteine persulfide intermediate. The interval Arg317–Tyr318 is interaction with tRNA.

Belongs to the MnmA/TRMU family.

It localises to the cytoplasm. The enzyme catalyses S-sulfanyl-L-cysteinyl-[protein] + uridine(34) in tRNA + AH2 + ATP = 2-thiouridine(34) in tRNA + L-cysteinyl-[protein] + A + AMP + diphosphate + H(+). Its function is as follows. Catalyzes the 2-thiolation of uridine at the wobble position (U34) of tRNA, leading to the formation of s(2)U34. In Shewanella sediminis (strain HAW-EB3), this protein is tRNA-specific 2-thiouridylase MnmA.